Consider the following 199-residue polypeptide: ATP-dependent Clp protease proteolytic subunit (199 aa).

The active-site Nucleophile is the Ser-98. His-123 is a catalytic residue.

The protein belongs to the peptidase S14 family. In terms of assembly, fourteen ClpP subunits assemble into 2 heptameric rings which stack back to back to give a disk-like structure with a central cavity, resembling the structure of eukaryotic proteasomes.

Its subcellular location is the cytoplasm. It carries out the reaction Hydrolysis of proteins to small peptides in the presence of ATP and magnesium. alpha-casein is the usual test substrate. In the absence of ATP, only oligopeptides shorter than five residues are hydrolyzed (such as succinyl-Leu-Tyr-|-NHMec, and Leu-Tyr-Leu-|-Tyr-Trp, in which cleavage of the -Tyr-|-Leu- and -Tyr-|-Trp bonds also occurs).. Cleaves peptides in various proteins in a process that requires ATP hydrolysis. Has a chymotrypsin-like activity. Plays a major role in the degradation of misfolded proteins. The polypeptide is ATP-dependent Clp protease proteolytic subunit (Clostridium botulinum (strain Eklund 17B / Type B)).